The chain runs to 816 residues: Stemod-13(17)-ene synthase (816 aa).

The span at 1-10 shows a compositional bias: polar residues; the sequence is MMLLSSSYSG. A disordered region spans residues 1–24; sequence MMLLSSSYSGGQFPGVSPLGTRPK. Mg(2+) contacts are provided by Asp553, Asp557, Asn698, Thr702, and Glu706. Positions 553–557 match the DDXXD motif motif; the sequence is DDFFD.

It belongs to the terpene synthase family. Mg(2+) serves as cofactor.

The enzyme catalyses 9alpha-copalyl diphosphate = stemod-13(17)-ene + diphosphate. Its function is as follows. Catalyzes the conversion of syn-copalyl diphosphate to stemodene. The sequence is that of Stemod-13(17)-ene synthase (KSL11) from Oryza sativa subsp. indica (Rice).